The chain runs to 1025 residues: AP-2 complex subunit alpha (1025 aa).

Residues 713–737 (RSIMVPMPPPSRRNTIDDVNSKISS) are disordered. Phosphothreonine is present on Thr727. Residue Ser733 is modified to Phosphoserine.

Belongs to the adaptor complexes large subunit family. Adaptor protein complex 2 (AP-2) is a heterotetramer composed of two large adaptins (alpha-type subunit APL3 and beta-type subunit APL1), a medium chain (mu-type subunit APM4) and a small adaptin (sigma-type subunit APS2).

The protein localises to the cell membrane. It is found in the membrane. It localises to the coated pit. Functionally, adaptins are components of the adaptor complexes which link clathrin to receptors in coated vesicles. Clathrin-associated protein complexes are believed to interact with the cytoplasmic tails of membrane proteins, leading to their selection and concentration. Alpha adaptin is a subunit of the plasma membrane adaptor. Facilitates interaction between APL1 and APS2. The sequence is that of AP-2 complex subunit alpha (APL3) from Saccharomyces cerevisiae (strain ATCC 204508 / S288c) (Baker's yeast).